Consider the following 469-residue polypeptide: Calcium/calmodulin-dependent protein kinase type IV (469 aa).

Ser-11 and Ser-12 each carry phosphoserine; by autocatalysis. A Protein kinase domain is found at Phe-42–Val-296. ATP is bound by residues Leu-48–Val-56 and Lys-71. An O-linked (GlcNAc) threonine glycan is attached at Thr-53. The O-linked (GlcNAc) serine glycan is linked to Ser-54. O-linked (GlcNAc) serine glycosylation occurs at Ser-133. Asp-160 serves as the catalytic Proton acceptor. O-linked (GlcNAc) serine glycosylation is present at Ser-185. Thr-196 carries the phosphothreonine modification. An autoinhibitory domain region spans residues Thr-297 to Gly-336. The PP2A-binding stretch occupies residues Asn-302–Arg-319. Residues Ala-318–Ser-337 form a calmodulin-binding region. Position 332 is a phosphoserine; by autocatalysis (Ser-332). The tract at residues Gly-336 to Tyr-469 is disordered. The residue at position 337 (Ser-337) is a Phosphoserine. Ser-340, Ser-341, and Ser-352 each carry an O-linked (GlcNAc) serine glycan. Residues Asp-360–Glu-374 show a composition bias toward basic and acidic residues. Positions Glu-375–Ala-388 are enriched in acidic residues. Basic and acidic residues predominate over residues Asp-389–Glu-409. Over residues Asp-417–Asp-426 the composition is skewed to acidic residues. The segment covering Pro-427–Glu-441 has biased composition (basic and acidic residues). Residues Ser-433 and Ser-439 each carry the phosphoserine modification. Residues Glu-442–Pro-453 show a composition bias toward acidic residues.

It belongs to the protein kinase superfamily. CAMK Ser/Thr protein kinase family. CaMK subfamily. Monomer. Interacts with protein phosphatase 2A (PPP2CA/PPP2CB); the interaction is mutually exclusive with binding to Ca(2+)/calmodulin. Post-translationally, phosphorylated by CaMKK1 and CaMKK2 on Thr-196. Dephosphorylated by protein phosphatase 2A. Autophosphorylated on Ser-11 and Ser-12. In terms of processing, glycosylation at Ser-185 modulates the phosphorylation of CaMK4 at Thr-196 and negatively regulates its activity toward CREB1 in basal conditions and during early inomycin stimulation. In terms of tissue distribution, expressed in brain and testis.

The protein resides in the cytoplasm. It is found in the nucleus. It carries out the reaction L-seryl-[protein] + ATP = O-phospho-L-seryl-[protein] + ADP + H(+). The enzyme catalyses L-threonyl-[protein] + ATP = O-phospho-L-threonyl-[protein] + ADP + H(+). With respect to regulation, activated by Ca(2+)/calmodulin. Binding of calmodulin results in conformational change that relieves intrasteric autoinhibition and allows phosphorylation of Thr-196 within the activation loop by CaMKK1 or CaMKK2. Phosphorylation of Thr-196 results in a 10-20-fold increase in total activity to generate Ca(2+)/calmodulin-independent activity. Autophosphorylation of the N-terminus Ser-11 and Ser-12 is required for full activation. Inactivated by protein phosphatase 2A (PPP2CA/PPP2CB) which dephosphorylates Thr-196, thereby terminating autonomous activity and helping to maintain the enzyme in its autoinhibited state. Its function is as follows. Calcium/calmodulin-dependent protein kinase that operates in the calcium-triggered CaMKK-CaMK4 signaling cascade and regulates, mainly by phosphorylation, the activity of several transcription activators, such as CREB1, MEF2D, JUN and RORA, which play pivotal roles in immune response, inflammation, and memory consolidation. In the thymus, regulates the CD4(+)/CD8(+) double positive thymocytes selection threshold during T-cell ontogeny. In CD4 memory T-cells, is required to link T-cell antigen receptor (TCR) signaling to the production of IL2, IFNG and IL4 (through the regulation of CREB and MEF2). Regulates the differentiation and survival phases of osteoclasts and dendritic cells (DCs). Mediates DCs survival by linking TLR4 and the regulation of temporal expression of BCL2. Phosphorylates the transcription activator CREB1 on 'Ser-133' in hippocampal neuron nuclei and contribute to memory consolidation and long term potentiation (LTP) in the hippocampus. Can activate the MAP kinases MAPK1/ERK2, MAPK8/JNK1 and MAPK14/p38 and stimulate transcription through the phosphorylation of ELK1 and ATF2. Can also phosphorylate in vitro CREBBP, PRM2, MEF2A and STMN1/OP18. May be involved in spermatogenesis. The polypeptide is Calcium/calmodulin-dependent protein kinase type IV (Camk4) (Mus musculus (Mouse)).